The sequence spans 292 residues: 4-hydroxy-tetrahydrodipicolinate synthase (292 aa).

Residue Thr-45 coordinates pyruvate. The active-site Proton donor/acceptor is Tyr-133. Residue Lys-161 is the Schiff-base intermediate with substrate of the active site. A pyruvate-binding site is contributed by Ile-203.

This sequence belongs to the DapA family. Homotetramer; dimer of dimers.

The protein resides in the cytoplasm. It carries out the reaction L-aspartate 4-semialdehyde + pyruvate = (2S,4S)-4-hydroxy-2,3,4,5-tetrahydrodipicolinate + H2O + H(+). It participates in amino-acid biosynthesis; L-lysine biosynthesis via DAP pathway; (S)-tetrahydrodipicolinate from L-aspartate: step 3/4. Catalyzes the condensation of (S)-aspartate-beta-semialdehyde [(S)-ASA] and pyruvate to 4-hydroxy-tetrahydrodipicolinate (HTPA). The chain is 4-hydroxy-tetrahydrodipicolinate synthase from Acidiphilium cryptum (strain JF-5).